A 200-amino-acid polypeptide reads, in one-letter code: dITP/XTP pyrophosphatase (200 aa).

A substrate-binding site is contributed by 7–12 (TSNKHK). Glutamate 38 and aspartate 73 together coordinate Mg(2+). Aspartate 73 (proton acceptor) is an active-site residue. Residues serine 74, 154-157 (FGYD), lysine 177, and 182-183 (HR) each bind substrate.

This sequence belongs to the HAM1 NTPase family. In terms of assembly, homodimer. It depends on Mg(2+) as a cofactor.

It catalyses the reaction XTP + H2O = XMP + diphosphate + H(+). The catalysed reaction is dITP + H2O = dIMP + diphosphate + H(+). It carries out the reaction ITP + H2O = IMP + diphosphate + H(+). Its function is as follows. Pyrophosphatase that catalyzes the hydrolysis of nucleoside triphosphates to their monophosphate derivatives, with a high preference for the non-canonical purine nucleotides XTP (xanthosine triphosphate), dITP (deoxyinosine triphosphate) and ITP. Seems to function as a house-cleaning enzyme that removes non-canonical purine nucleotides from the nucleotide pool, thus preventing their incorporation into DNA/RNA and avoiding chromosomal lesions. The chain is dITP/XTP pyrophosphatase from Campylobacter jejuni subsp. jejuni serotype O:6 (strain 81116 / NCTC 11828).